An 881-amino-acid polypeptide reads, in one-letter code: MLQPTTCSKQQQQRQQPAIATAAVGGAAVQELLRKAAAKDHGALAAATATATAASTTATTATAATASRNSSNTWCHSDDMLSAGRSRSSSTTIDFNSRRRRGRLRGHAPSDLAMNKQHQATILDECVNIFKRLVLLTLKTISATTITKAKTRSRTAAQLPATSAASATSSRGASAEQLLHPSSRSRCRSRRCLRLPIYSILLLCLTTQGLGLGDAAKPRPAKQHFGGSNSNSPNQNQNHNDVLGGVGAPSQTSGEDEAEIMYPFQSGEQMFGLEEDQEQDPELNSNAVPGSDEDNAGNQRGINDTHNDNSTTTKTPLFPKDLFTKEQLENGAVILHIIGVIYMFVALAIVCDEFFVPSLDVIIEKLGITDDVAGATFMAAGGSAPELFTSVIGVFVSFDDVGIGTIVGSAVFNILFVIGMCALFSKTVLSLTWWPLFRDCSFYSISLLVLIYFFRDNRIFWWEALILFTIYIGYVAFMKWNVQVETCVKKMITKNKVTRVRSTDQLMPAGNAANSSETSMATQPGGSVTSRAASETRSGPPGSSNAGATGNSSGGGGTSGSTQTGAKFRHGLLQLMIHTIDPLHDGKVDEKATQLHAIASLKVLLDATKPQRGGATTSAANHVKINLKETTLADRPNGNIDTTLDSPSLSGRRPSWIEQRVKIQTRKFSIKAPEIEDEPEPLSMAWPDTARKRLTYVLVAPLLVPMWLTLPDTRTPRGKRFFPVTFIGSIVWIAAFSYLMVWWANVAGDTARIPPEVMGLTFLAAGTSIPDLITSVIVARKGFGDMAVSSSVGSNIFDVTVGLPIPWLLYGIIYGAPVEVNSVGMVCSITILFMMLVFVVMSIACFRWRMNKGLGFTMFLLYFAFVAVSLMFEYDVITCPF.

Over 1 to 194 (MLQPTTCSKQ…SRCRSRRCLR (194 aa)) the chain is Extracellular. N-linked (GlcNAc...) asparagine glycosylation occurs at N69. Disordered regions lie at residues 79–111 (DMLS…APSD), 149–181 (AKTR…LLHP), 215–255 (AAKP…TSGE), and 272–315 (GLEE…TTKT). Over residues 85–95 (RSRSSSTTIDF) the composition is skewed to polar residues. Residues 149-175 (AKTRSRTAAQLPATSAASATSSRGASA) are compositionally biased toward low complexity. A helical transmembrane segment spans residues 195-215 (LPIYSILLLCLTTQGLGLGDA). The Cytoplasmic portion of the chain corresponds to 216-330 (AKPRPAKQHF…DLFTKEQLEN (115 aa)). Residues 228–240 (SNSNSPNQNQNHN) are compositionally biased toward low complexity. The segment covering 296–315 (AGNQRGINDTHNDNSTTTKT) has biased composition (polar residues). A helical membrane pass occupies residues 331–351 (GAVILHIIGVIYMFVALAIVC). Residues 352–375 (DEFFVPSLDVIIEKLGITDDVAGA) are Extracellular-facing. An Alpha-1 repeat occupies 372 to 412 (VAGATFMAAGGSAPELFTSVIGVFVSFDDVGIGTIVGSAVF). The helical transmembrane segment at 376-396 (TFMAAGGSAPELFTSVIGVFV) threads the bilayer. Residues 397–402 (SFDDVG) are Cytoplasmic-facing. The chain crosses the membrane as a helical span at residues 403–423 (IGTIVGSAVFNILFVIGMCAL). The Extracellular portion of the chain corresponds to 424–433 (FSKTVLSLTW). The chain crosses the membrane as a helical span at residues 434–454 (WPLFRDCSFYSISLLVLIYFF). Residues 455–458 (RDNR) lie on the Cytoplasmic side of the membrane. The chain crosses the membrane as a helical span at residues 459-479 (IFWWEALILFTIYIGYVAFMK). The Extracellular portion of the chain corresponds to 480–720 (WNVQVETCVK…PDTRTPRGKR (241 aa)). Positions 508–565 (PAGNAANSSETSMATQPGGSVTSRAASETRSGPPGSSNAGATGNSSGGGGTSGSTQTG) are disordered. The span at 512–537 (AANSSETSMATQPGGSVTSRAASETR) shows a compositional bias: polar residues. Residues N514 and N551 are each glycosylated (N-linked (GlcNAc...) asparagine). The span at 542–551 (GSSNAGATGN) shows a compositional bias: low complexity. Residues 721–741 (FFPVTFIGSIVWIAAFSYLMV) form a helical membrane-spanning segment. Topologically, residues 742–756 (WWANVAGDTARIPPE) are cytoplasmic. The helical transmembrane segment at 757 to 777 (VMGLTFLAAGTSIPDLITSVI) threads the bilayer. The stretch at 764–795 (AAGTSIPDLITSVIVARKGFGDMAVSSSVGSN) is one Alpha-2 repeat. The Extracellular portion of the chain corresponds to 778–795 (VARKGFGDMAVSSSVGSN). The helical transmembrane segment at 796–816 (IFDVTVGLPIPWLLYGIIYGA) threads the bilayer. At 817 to 822 (PVEVNS) the chain is on the cytoplasmic side. A helical membrane pass occupies residues 823-843 (VGMVCSITILFMMLVFVVMSI). Over 844–852 (ACFRWRMNK) the chain is Extracellular. The chain crosses the membrane as a helical span at residues 853–873 (GLGFTMFLLYFAFVAVSLMFE). At 874–881 (YDVITCPF) the chain is on the cytoplasmic side.

It belongs to the Ca(2+):cation antiporter (CaCA) (TC 2.A.19) family. SLC24A subfamily. As to expression, expressed in the adult nervous system. Expressed in the photoreceptor cells as well as in the lamina, medulla, and optic lobes of the brain.

It localises to the membrane. Functionally, may function in the removal and maintenance of calcium homeostasis during signaling in the adult and in signaling events during embryogenesis and patterning of imaginal disks. Transports one Ca(2+) and 1 K(+) in exchange for 4 Na(+). This is Sodium/potassium/calcium exchanger Nckx30C (Nckx30C) from Drosophila melanogaster (Fruit fly).